The primary structure comprises 72 residues: Translation initiation factor IF-1 (72 aa).

Residues 2-72 (AKEDVIEIQG…TKGRITYRFK (71 aa)) enclose the S1-like domain.

It belongs to the IF-1 family. In terms of assembly, component of the 30S ribosomal translation pre-initiation complex which assembles on the 30S ribosome in the order IF-2 and IF-3, IF-1 and N-formylmethionyl-tRNA(fMet); mRNA recruitment can occur at any time during PIC assembly.

The protein localises to the cytoplasm. Its function is as follows. One of the essential components for the initiation of protein synthesis. Stabilizes the binding of IF-2 and IF-3 on the 30S subunit to which N-formylmethionyl-tRNA(fMet) subsequently binds. Helps modulate mRNA selection, yielding the 30S pre-initiation complex (PIC). Upon addition of the 50S ribosomal subunit IF-1, IF-2 and IF-3 are released leaving the mature 70S translation initiation complex. The polypeptide is Translation initiation factor IF-1 (Lactiplantibacillus plantarum (strain ATCC BAA-793 / NCIMB 8826 / WCFS1) (Lactobacillus plantarum)).